Here is a 168-residue protein sequence, read N- to C-terminus: Transcription antitermination protein NusB (168 aa).

This sequence belongs to the NusB family.

Involved in transcription antitermination. Required for transcription of ribosomal RNA (rRNA) genes. Binds specifically to the boxA antiterminator sequence of the ribosomal RNA (rrn) operons. The chain is Transcription antitermination protein NusB from Deinococcus deserti (strain DSM 17065 / CIP 109153 / LMG 22923 / VCD115).